Here is a 258-residue protein sequence, read N- to C-terminus: UDP-N-acetylenolpyruvoylglucosamine reductase (258 aa).

Arg-142 is a catalytic residue. Ser-184 serves as the catalytic Proton donor. Glu-254 is an active-site residue.

It belongs to the MurB family. FAD serves as cofactor.

Its subcellular location is the cytoplasm. It catalyses the reaction UDP-N-acetyl-alpha-D-muramate + NADP(+) = UDP-N-acetyl-3-O-(1-carboxyvinyl)-alpha-D-glucosamine + NADPH + H(+). The protein operates within cell wall biogenesis; peptidoglycan biosynthesis. Cell wall formation. The protein is UDP-N-acetylenolpyruvoylglucosamine reductase of Campylobacter jejuni subsp. jejuni serotype O:2 (strain ATCC 700819 / NCTC 11168).